The primary structure comprises 126 residues: Holo-[acyl-carrier-protein] synthase (126 aa).

Positions 9 and 58 each coordinate Mg(2+).

This sequence belongs to the P-Pant transferase superfamily. AcpS family. Requires Mg(2+) as cofactor.

It localises to the cytoplasm. It carries out the reaction apo-[ACP] + CoA = holo-[ACP] + adenosine 3',5'-bisphosphate + H(+). Functionally, transfers the 4'-phosphopantetheine moiety from coenzyme A to a Ser of acyl-carrier-protein. The polypeptide is Holo-[acyl-carrier-protein] synthase (Vibrio vulnificus (strain CMCP6)).